A 273-amino-acid chain; its full sequence is MNAIFVANKPAGMSSNHFLGRLKRKYGVKKAGFSGTLDPFASGCLIVAFGSYTKFFRFLDKSPKVYEATIWLGASSPSMDNENITEISNVKELNLEKLEAIRGELIGKISYIPPKFSAKHVNGTRAYKLARSGEEFELKPEIMEIYESEILNYSHPFLTLRLSVSEGSYIRSYAEIFGQKVGYNVTLSSLKRVSEGKFRYENEKFLNICNFLNIEQNTYFGDINNILDGKELKINDFETQTQGIYLLNYDKFMSVIQIMDDTINYTLNKVEKC.

D38 serves as the catalytic Nucleophile.

It belongs to the pseudouridine synthase TruB family. Type 1 subfamily.

It catalyses the reaction uridine(55) in tRNA = pseudouridine(55) in tRNA. Responsible for synthesis of pseudouridine from uracil-55 in the psi GC loop of transfer RNAs. The polypeptide is tRNA pseudouridine synthase B (Campylobacter concisus (strain 13826)).